The following is a 169-amino-acid chain: Protein-export protein SecB (169 aa).

Belongs to the SecB family. As to quaternary structure, homotetramer, a dimer of dimers. One homotetramer interacts with 1 SecA dimer.

The protein localises to the cytoplasm. One of the proteins required for the normal export of preproteins out of the cell cytoplasm. It is a molecular chaperone that binds to a subset of precursor proteins, maintaining them in a translocation-competent state. It also specifically binds to its receptor SecA. The protein is Protein-export protein SecB of Alteromonas mediterranea (strain DSM 17117 / CIP 110805 / LMG 28347 / Deep ecotype).